The chain runs to 322 residues: DNA repair and recombination protein RadA (322 aa).

105 to 112 (GMFGSGKT) is a binding site for ATP.

Belongs to the eukaryotic RecA-like protein family.

Its function is as follows. Involved in DNA repair and in homologous recombination. Binds and assemble on single-stranded DNA to form a nucleoprotein filament. Hydrolyzes ATP in a ssDNA-dependent manner and promotes DNA strand exchange between homologous DNA molecules. This Methanococcus maripaludis (strain DSM 14266 / JCM 13030 / NBRC 101832 / S2 / LL) protein is DNA repair and recombination protein RadA.